Reading from the N-terminus, the 258-residue chain is Tryptophan synthase alpha chain (258 aa).

Active-site proton acceptor residues include E47 and D58.

The protein belongs to the TrpA family. Tetramer of two alpha and two beta chains.

The enzyme catalyses (1S,2R)-1-C-(indol-3-yl)glycerol 3-phosphate + L-serine = D-glyceraldehyde 3-phosphate + L-tryptophan + H2O. It functions in the pathway amino-acid biosynthesis; L-tryptophan biosynthesis; L-tryptophan from chorismate: step 5/5. The alpha subunit is responsible for the aldol cleavage of indoleglycerol phosphate to indole and glyceraldehyde 3-phosphate. The polypeptide is Tryptophan synthase alpha chain (Bacillus cereus (strain ZK / E33L)).